The primary structure comprises 207 residues: dTTP/UTP pyrophosphatase (207 aa).

Aspartate 79 acts as the Proton acceptor in catalysis.

This sequence belongs to the Maf family. YhdE subfamily. Requires a divalent metal cation as cofactor.

The protein resides in the cytoplasm. The enzyme catalyses dTTP + H2O = dTMP + diphosphate + H(+). The catalysed reaction is UTP + H2O = UMP + diphosphate + H(+). Functionally, nucleoside triphosphate pyrophosphatase that hydrolyzes dTTP and UTP. May have a dual role in cell division arrest and in preventing the incorporation of modified nucleotides into cellular nucleic acids. The polypeptide is dTTP/UTP pyrophosphatase (Rhodopseudomonas palustris (strain BisB18)).